The following is a 3391-amino-acid chain: Genome polyprotein (3391 aa).

Residues 1–15 (MNNQRKKARNTPFNM) are interaction with host EXOC1. Over 1 to 101 (MNNQRKKARN…LNILNRRRRT (101 aa)) the chain is Cytoplasmic. The segment at 37–72 (MLQGRGPLKLFMALVAFLRFLTIPPTAGILKRWGTI) is hydrophobic; homodimerization of capsid protein C. Positions 101–114 (TAGMIIMLIPTVMA) are cleaved as a propeptide — ER anchor for the capsid protein C, removed in mature form by serine protease NS3. A helical membrane pass occupies residues 102 to 122 (AGMIIMLIPTVMAFHLTTRNG). Topologically, residues 123 to 238 (EPHMIVSRQE…GAWKHAQRIE (116 aa)) are extracellular. Asn-183 carries N-linked (GlcNAc...) asparagine; by host glycosylation. Residues 239–259 (TWILRHPGFTIMAAILAYTIG) form a helical membrane-spanning segment. At 260 to 265 (TTHFQR) the chain is on the cytoplasmic side. A helical transmembrane segment spans residues 266 to 280 (ALIFILLTAVAPSMT). At 281–725 (MRCIGISNRD…LHQVFGAIYG (445 aa)) the chain is on the extracellular side. Cystine bridges form between Cys-283-Cys-310, Cys-340-Cys-401, Cys-354-Cys-385, and Cys-372-Cys-396. Residue Asn-347 is glycosylated (N-linked (GlcNAc...) asparagine; by host). The fusion peptide stretch occupies residues 378 to 391 (DRGWGNGCGLFGKG). The N-linked (GlcNAc...) asparagine; by host glycan is linked to Asn-433. 2 cysteine pairs are disulfide-bonded: Cys-465–Cys-565 and Cys-582–Cys-613. A helical membrane pass occupies residues 726-746 (AAFSGVSWIMKILIGVIITWI). Topologically, residues 747 to 752 (GMNSRS) are cytoplasmic. A helical transmembrane segment spans residues 753–773 (TSLSVSLVLVGVVTLYLGVMV). Residues 774-1195 (QADSGCVVSW…MVGATMTDDI (422 aa)) are Extracellular-facing. 6 disulfides stabilise this stretch: Cys-779-Cys-790, Cys-830-Cys-918, Cys-954-Cys-998, Cys-1055-Cys-1104, Cys-1066-Cys-1088, and Cys-1087-Cys-1091. Residues Asn-905 and Asn-982 are each glycosylated (N-linked (GlcNAc...) asparagine; by host). Residues 1196–1220 (GMGVTYLALLAAFKVRPTFAAGLLL) form a helical membrane-spanning segment. Residues 1221 to 1226 (RKLTSK) lie on the Cytoplasmic side of the membrane. Residues 1227–1245 (ELMMTTIGIVLLSQSTIPE) form a helical membrane-spanning segment. Residues 1246 to 1269 (TILELTDALALGMMVLKMVRKMEK) are Lumenal-facing. A helical transmembrane segment spans residues 1270 to 1290 (YQLAVTIMAILCVPNAVILQN). Residue Ala-1291 is a topological domain, cytoplasmic. Residues 1292 to 1310 (WKVSCTILAVVSVSPLFLT) form a helical membrane-spanning segment. The Lumenal segment spans residues 1311–1317 (SSQQKAD). The chain crosses the membrane as a helical span at residues 1318-1338 (WIPLALTIKGLNPTAIFLTTL). Residues 1339-1346 (SRTNKKRS) are Cytoplasmic-facing. A helical membrane pass occupies residues 1347–1367 (WPLNEAIMAVGMVSILASSLL). The Lumenal segment spans residues 1368-1370 (KND). A helical membrane pass occupies residues 1371–1391 (IPMTGPLVAGGLLTVCYVLTG). Over 1392–1447 (RSADLELERAADVKWEDQAEISGSSPILSITISEDGSMSIKNEEEEQTLTILIRTG) the chain is Cytoplasmic. Residues 1398–1437 (LERAADVKWEDQAEISGSSPILSITISEDGSMSIKNEEEE) form an interacts with and activates NS3 protease region. The segment at residues 1448–1468 (LLVISGLFPVSIPITAAAWYL) is an intramembrane region (helical). Topologically, residues 1469 to 2147 (WEVKKQRAGV…LSELPETLET (679 aa)) are cytoplasmic. The 178-residue stretch at 1476–1653 (AGVLWDVPSP…EKSIEDNPEI (178 aa)) folds into the Peptidase S7 domain. Residues His-1526, Asp-1550, and Ser-1610 each act as charge relay system; for serine protease NS3 activity in the active site. One can recognise a Helicase ATP-binding domain in the interval 1655-1811 (DDIFRKRKLT…QSNAPIMDEE (157 aa)). Residues 1659-1662 (RKRK) are important for RNA-binding. 1668–1675 (LHPGAGKT) lines the ATP pocket. The DEAH box motif lies at 1759–1762 (DEAH). Residues 1821-1988 (SGHEWVTDFK…IIPSMFEPER (168 aa)) enclose the Helicase C-terminal domain. N6-acetyllysine; by host is present on Lys-1863. The helical transmembrane segment at 2148-2168 (LLLLTLLATVTGGIFLFLMSG) threads the bilayer. Residues 2169 to 2170 (RG) lie on the Lumenal side of the membrane. An intramembrane region (helical) is located at residues 2171–2191 (IGKMTLGMCCIITASILLWYA). Position 2192 (Gln-2192) is a topological domain, lumenal. Residues 2193 to 2213 (IQPHWIAASIILEFFLIVLLI) form a helical membrane-spanning segment. Topologically, residues 2214–2228 (PEPEKQRTPQDNQLT) are cytoplasmic. A helical transmembrane segment spans residues 2229–2249 (YVVIAILTVVAATMANEMGFL). Topologically, residues 2250–2274 (EKTKKDLGLGSITTQQPESNILDID) are lumenal. The segment at residues 2275–2295 (LRPASAWTLYAVATTFVTPML) is an intramembrane region (helical). At 2296–2316 (RHSIENSSVNVSLTAIANQAT) the chain is on the lumenal side. Residues Asn-2301 and Asn-2305 are each glycosylated (N-linked (GlcNAc...) asparagine; by host). The helical intramembrane region spans 2317-2337 (VLMGLGKGWPLSKMDIGVPLL). Residues 2338–2347 (AIGCYSQVNP) are Lumenal-facing. A helical transmembrane segment spans residues 2348–2368 (ITLTAALFLLVAHYAIIGPGL). The Cytoplasmic segment spans residues 2369–2413 (QAKATREAQKRAAAGIMKNPTVDGITVIDLDPIPYDPKFEKQLGQ). Residues 2414 to 2434 (VMLLVLCVTQVLMMRTTWALC) form a helical membrane-spanning segment. The Lumenal segment spans residues 2435–2459 (EALTLATGPISTLWEGNPGRFWNTT). Asn-2457 carries an N-linked (GlcNAc...) asparagine; by host glycan. Residues 2460–2480 (IAVSMANIFRGSYLAGAGLLF) traverse the membrane as a helical segment. Residues 2481 to 3391 (SIMKNTTNTR…KEEEEAGVLW (911 aa)) lie on the Cytoplasmic side of the membrane. The mRNA cap 0-1 NS5-type MT domain maps to 2493-2755 (TGNIGETLGE…DVDLGSGTRN (263 aa)). Ser-2547 is an S-adenosyl-L-methionine binding site. Ser-2547 is modified (phosphoserine). Lys-2552 acts as the For 2'-O-MTase activity in catalysis. The SUMO-interacting motif signature appears at 2568–2571 (VVDL). Positions 2577, 2578, 2595, 2596, 2622, and 2623 each coordinate S-adenosyl-L-methionine. The active-site For 2'-O-MTase activity is the Asp-2637. Ile-2638 is a binding site for S-adenosyl-L-methionine. Catalysis depends on for 2'-O-MTase activity residues Lys-2672 and Glu-2708. Residue Tyr-2710 coordinates S-adenosyl-L-methionine. Residues Glu-2929, His-2933, Cys-2938, and Cys-2941 each contribute to the Zn(2+) site. A RdRp catalytic domain is found at 3019–3168 (GAMYADDTAG…KPLDDRFASA (150 aa)). Residues His-3203, Cys-3219, and Cys-3338 each coordinate Zn(2+).

This sequence in the N-terminal section; belongs to the class I-like SAM-binding methyltransferase superfamily. mRNA cap 0-1 NS5-type methyltransferase family. Homodimer. Interacts (via N-terminus) with host EXOC1 (via C-terminus); this interaction results in EXOC1 degradation through the proteasome degradation pathway. In terms of assembly, forms heterodimers with envelope protein E in the endoplasmic reticulum and Golgi. As to quaternary structure, homodimer; in the endoplasmic reticulum and Golgi. Interacts with protein prM. Interacts with non-structural protein 1. Homodimer; Homohexamer when secreted. Interacts with envelope protein E. Interacts with host PRKAA1. In terms of assembly, interacts (via N-terminus) with serine protease NS3. As to quaternary structure, forms a heterodimer with serine protease NS3. May form homooligomers. Forms a heterodimer with NS2B. Interacts with NS4B. Interacts with unphosphorylated RNA-directed RNA polymerase NS5; this interaction stimulates RNA-directed RNA polymerase NS5 guanylyltransferase activity. Interacts with host SHFL. In terms of assembly, interacts with host MAVS; this interaction inhibits the synthesis of IFN-beta. Interacts with host MAVS; this interaction inhibits the synthesis of IFN-beta. Interacts with host SHFL. Interacts with host AUP1; the interaction occurs in the presence of Dengue virus NS4B and induces lipophagy which facilitates production of virus progeny particles. May interact with host SRPRA and SEC61G. As to quaternary structure, interacts with serine protease NS. Homodimer. Interacts with host STAT2; this interaction inhibits the phosphorylation of the latter, and, when all viral proteins are present (polyprotein), targets STAT2 for degradation. Interacts with serine protease NS3. Interacts with host PAF1 complex; the interaction may prevent the recruitment of the PAF1 complex to interferon-responsive genes, and thus reduces the immune response. Post-translationally, specific enzymatic cleavages in vivo yield mature proteins. Cleavages in the lumen of endoplasmic reticulum are performed by host signal peptidase, whereas cleavages in the cytoplasmic side are performed by serine protease NS3. Signal cleavage at the 2K-4B site requires a prior NS3 protease-mediated cleavage at the 4A-2K site. Cleaved in post-Golgi vesicles by a host furin, releasing the mature small envelope protein M, and peptide pr. This cleavage is incomplete as up to 30% of viral particles still carry uncleaved prM. In terms of processing, N-glycosylated. Post-translationally, N-glycosylated. The excreted form is glycosylated and this is required for efficient secretion of the protein from infected cells. Acetylated by host KAT5. Acetylation modulates NS3 RNA-binding and unwinding activities and plays an important positive role for viral replication. In terms of processing, sumoylation of RNA-directed RNA polymerase NS5 increases NS5 protein stability allowing proper viral RNA replication. Post-translationally, phosphorylated on serines residues. This phosphorylation may trigger NS5 nuclear localization.

The protein resides in the virion. Its subcellular location is the host nucleus. The protein localises to the host cytoplasm. It is found in the host perinuclear region. It localises to the secreted. The protein resides in the virion membrane. Its subcellular location is the host endoplasmic reticulum membrane. The protein localises to the host mitochondrion. The enzyme catalyses Selective hydrolysis of -Xaa-Xaa-|-Yaa- bonds in which each of the Xaa can be either Arg or Lys and Yaa can be either Ser or Ala.. It carries out the reaction RNA(n) + a ribonucleoside 5'-triphosphate = RNA(n+1) + diphosphate. It catalyses the reaction a ribonucleoside 5'-triphosphate + H2O = a ribonucleoside 5'-diphosphate + phosphate + H(+). The catalysed reaction is ATP + H2O = ADP + phosphate + H(+). The enzyme catalyses a 5'-end (5'-triphosphoguanosine)-ribonucleoside in mRNA + S-adenosyl-L-methionine = a 5'-end (N(7)-methyl 5'-triphosphoguanosine)-ribonucleoside in mRNA + S-adenosyl-L-homocysteine. It carries out the reaction a 5'-end (N(7)-methyl 5'-triphosphoguanosine)-ribonucleoside in mRNA + S-adenosyl-L-methionine = a 5'-end (N(7)-methyl 5'-triphosphoguanosine)-(2'-O-methyl-ribonucleoside) in mRNA + S-adenosyl-L-homocysteine + H(+). In terms of biological role, plays a role in virus budding by binding to the cell membrane and gathering the viral RNA into a nucleocapsid that forms the core of a mature virus particle. During virus entry, may induce genome penetration into the host cytoplasm after hemifusion induced by the surface proteins. Can migrate to the cell nucleus where it modulates host functions. Overcomes the anti-viral effects of host EXOC1 by sequestering and degrading the latter through the proteasome degradation pathway. Its function is as follows. Inhibits RNA silencing by interfering with host Dicer. Functionally, prevents premature fusion activity of envelope proteins in trans-Golgi by binding to envelope protein E at pH6.0. After virion release in extracellular space, gets dissociated from E dimers. Acts as a chaperone for envelope protein E during intracellular virion assembly by masking and inactivating envelope protein E fusion peptide. prM is the only viral peptide matured by host furin in the trans-Golgi network probably to avoid catastrophic activation of the viral fusion activity in acidic Golgi compartment prior to virion release. prM-E cleavage is inefficient, and many virions are only partially matured. These uncleaved prM would play a role in immune evasion. In terms of biological role, may play a role in virus budding. Exerts cytotoxic effects by activating a mitochondrial apoptotic pathway through M ectodomain. May display a viroporin activity. Its function is as follows. Binds to host cell surface receptor and mediates fusion between viral and cellular membranes. Envelope protein is synthesized in the endoplasmic reticulum in the form of heterodimer with protein prM. They play a role in virion budding in the ER, and the newly formed immature particle is covered with 60 spikes composed of heterodimer between precursor prM and envelope protein E. The virion is transported to the Golgi apparatus where the low pH causes dissociation of PrM-E heterodimers and formation of E homodimers. prM-E cleavage is inefficient, and many virions are only partially matured. These uncleaved prM would play a role in immune evasion. Functionally, involved in immune evasion, pathogenesis and viral replication. Once cleaved off the polyprotein, is targeted to three destinations: the viral replication cycle, the plasma membrane and the extracellular compartment. Essential for viral replication. Required for formation of the replication complex and recruitment of other non-structural proteins to the ER-derived membrane structures. Excreted as a hexameric lipoparticle that plays a role against host immune response. Antagonizing the complement function. Binds to the host macrophages and dendritic cells. Inhibits signal transduction originating from Toll-like receptor 3 (TLR3). Mediates complement activation, which may contribute to the pathogenesis of the vascular leakage that occurs in severe dengue disease. Activates autophagy through the AMPK/ERK/mTOR signaling pathway. Mechanistically, acts as the assembly platform for STK11-AMPK interactions and promotes STK11-AMPK interactions. In turn, promotes phosphorylation of the AMPK kinase structural domain and activates AMPK, thereby positively regulating the AMPK/ERK/mTOR signaling pathway and inducing autophagy. Disrupts the host endothelial glycocalyx layer of host pulmonary microvascular endothelial cells, inducing degradation of sialic acid and shedding of heparan sulfate proteoglycans. NS1 induces expression of sialidases, heparanase, and activates cathepsin L, which activates heparanase via enzymatic cleavage. These effects are probably linked to the endothelial hyperpermeability observed in severe dengue disease. In terms of biological role, component of the viral RNA replication complex that functions in virion assembly and antagonizes the host immune response. Its function is as follows. Required cofactor for the serine protease function of NS3. May have membrane-destabilizing activity and form viroporins. Functionally, displays three enzymatic activities: serine protease, NTPase and RNA helicase. NS3 serine protease, in association with NS2B, performs its autocleavage and cleaves the polyprotein at dibasic sites in the cytoplasm: C-prM, NS2A-NS2B, NS2B-NS3, NS3-NS4A, NS4A-2K and NS4B-NS5. NS3 RNA helicase binds RNA and unwinds dsRNA in the 3' to 5' direction. Regulates the ATPase activity of the NS3 helicase activity. NS4A allows NS3 helicase to conserve energy during unwinding. Plays a role in the inhibition of the host innate immune response. Interacts with host MAVS and thereby prevents the interaction between RIGI and MAVS. In turn, IFN-beta production is impaired. Interacts with host AUP1 which mediates induction of lipophagy in host cells and facilitates production of virus progeny particles. In terms of biological role, functions as a signal peptide for NS4B and is required for the interferon antagonism activity of the latter. Its function is as follows. Induces the formation of ER-derived membrane vesicles where the viral replication takes place. Inhibits interferon (IFN)-induced host STAT1 phosphorylation and nuclear translocation, thereby preventing the establishment of cellular antiviral state by blocking the IFN-alpha/beta pathway. Functionally, replicates the viral (+) and (-) RNA genome, and performs the capping of genomes in the cytoplasm. NS5 methylates viral RNA cap at guanine N-7 and ribose 2'-O positions. Besides its role in RNA genome replication, also prevents the establishment of cellular antiviral state by blocking the interferon-alpha/beta (IFN-alpha/beta) signaling pathway. Inhibits host TYK2 and STAT2 phosphorylation, thereby preventing activation of JAK-STAT signaling pathway. May reduce immune responses by preventing the recruitment of the host PAF1 complex to interferon-responsive genes. This chain is Genome polyprotein, found in Aedimorphus (Red guenon).